A 141-amino-acid polypeptide reads, in one-letter code: Hemoglobin subunit alpha-D (141 aa).

Positions 1–141 constitute a Globin domain; sequence MLTEDDKQLI…VSAVLAEKYR (141 aa). Heme b is bound by residues histidine 58 and histidine 87.

Belongs to the globin family. As to quaternary structure, heterotetramer of two alpha-D chains and two beta chains. In terms of tissue distribution, red blood cells.

In terms of biological role, involved in oxygen transport from the lung to the various peripheral tissues. The protein is Hemoglobin subunit alpha-D (HBAD) of Chelonoidis niger (Galapagos giant tortoise).